Reading from the N-terminus, the 545-residue chain is Luciferin 4-monooxygenase (545 aa).

The short motif at 543–545 is the Microbody targeting signal element; sequence SKL.

It belongs to the ATP-dependent AMP-binding enzyme family. Mg(2+) serves as cofactor.

The protein resides in the peroxisome. It carries out the reaction firefly D-luciferin + ATP + O2 = firefly oxyluciferin + hnu + AMP + CO2 + diphosphate. In terms of biological role, produces green light with a wavelength of 562 nm. The polypeptide is Luciferin 4-monooxygenase (Photuris pensylvanica (Pennsylania firefly)).